The chain runs to 139 residues: Large-conductance mechanosensitive channel (139 aa).

2 consecutive transmembrane segments (helical) span residues 14-34 and 81-101; these read VIDL…INSL and GSFL…FMIV.

It belongs to the MscL family. Homopentamer.

It localises to the cell membrane. In terms of biological role, channel that opens in response to stretch forces in the membrane lipid bilayer. May participate in the regulation of osmotic pressure changes within the cell. In Chloroflexus aurantiacus (strain ATCC 29366 / DSM 635 / J-10-fl), this protein is Large-conductance mechanosensitive channel.